The chain runs to 572 residues: Methionine--tRNA ligase (572 aa).

The 'HIGH' region motif lies at 11-21; that stretch reads PYINGIKHLGN. Zn(2+) contacts are provided by C143, C146, C156, and C159. The 'KMSKS' region motif lies at 346–350; that stretch reads QFSTS. T349 contacts ATP.

The protein belongs to the class-I aminoacyl-tRNA synthetase family. MetG type 1 subfamily. Monomer. Zn(2+) is required as a cofactor.

It localises to the cytoplasm. The catalysed reaction is tRNA(Met) + L-methionine + ATP = L-methionyl-tRNA(Met) + AMP + diphosphate. Its function is as follows. Is required not only for elongation of protein synthesis but also for the initiation of all mRNA translation through initiator tRNA(fMet) aminoacylation. This Cereibacter sphaeroides (strain ATCC 17029 / ATH 2.4.9) (Rhodobacter sphaeroides) protein is Methionine--tRNA ligase.